The following is a 441-amino-acid chain: Bacteria-responsive protein 1 (441 aa).

Positions 1–18 (MWFFKVGALLFLAALVSA) are cleaved as a signal peptide. Asn20 is a glycosylation site (N-linked (GlcNAc...) asparagine). Residues 25 to 441 (PKVLCYYDGQ…PILRAAKYRL (417 aa)) form the GH18 domain. A disulfide bond links Cys29 and Cys56. N-linked (GlcNAc...) asparagine glycosylation occurs at Asn225.

It belongs to the glycosyl hydrolase 18 family. IDGF subfamily. Salivary gland (at protein level).

Its subcellular location is the secreted. In terms of biological role, promotes recruitment of host neutrophils at the bite site. Induces expression of IL1B and IL6 in the skin of the host. (Microbial infection) Enhances Zika virus replication and exacerbates disease pathogenesis in the host. The sequence is that of Bacteria-responsive protein 1 from Aedes aegypti (Yellowfever mosquito).